The sequence spans 428 residues: YTH domain-containing protein ECT1 (428 aa).

Residues 245–382 enclose the YTH domain; sequence AKFFVIKSYS…EHGTKIIKIF (138 aa). Residues 251–253, Asp257, 267–268, Asn300, Trp324, Trp329, and Trp337 each bind RNA; these read KSY and WS.

In terms of assembly, interacts (via C-terminus) with CIPK1. As to expression, expressed in root apex, shoot apex, lateral root primordia, stamens, carpels and trichomes.

It is found in the nucleus. It localises to the cytoplasm. In terms of biological role, specifically recognizes and binds N6-methyladenosine (m6A)-containing RNAs, and regulates mRNA stability. M6A is a modification present at internal sites of mRNAs and some non-coding RNAs and plays a role in mRNA stability and processing. The polypeptide is YTH domain-containing protein ECT1 (Arabidopsis thaliana (Mouse-ear cress)).